A 459-amino-acid polypeptide reads, in one-letter code: Cysteine--tRNA ligase (459 aa).

Cys-28 is a Zn(2+) binding site. A 'HIGH' region motif is present at residues 30–40 (ITIYDYCHIGH). Cys-209, His-234, and Glu-238 together coordinate Zn(2+). Residues 266–270 (KMSKS) carry the 'KMSKS' region motif. Lys-269 contributes to the ATP binding site.

The protein belongs to the class-I aminoacyl-tRNA synthetase family. As to quaternary structure, monomer. Zn(2+) is required as a cofactor.

The protein localises to the cytoplasm. It catalyses the reaction tRNA(Cys) + L-cysteine + ATP = L-cysteinyl-tRNA(Cys) + AMP + diphosphate. This chain is Cysteine--tRNA ligase, found in Pseudoalteromonas translucida (strain TAC 125).